Here is a 338-residue protein sequence, read N- to C-terminus: Phenylalanine--tRNA ligase alpha subunit (338 aa).

Glu-252 contacts Mg(2+).

It belongs to the class-II aminoacyl-tRNA synthetase family. Phe-tRNA synthetase alpha subunit type 1 subfamily. As to quaternary structure, tetramer of two alpha and two beta subunits. Requires Mg(2+) as cofactor.

The protein localises to the cytoplasm. The catalysed reaction is tRNA(Phe) + L-phenylalanine + ATP = L-phenylalanyl-tRNA(Phe) + AMP + diphosphate + H(+). The protein is Phenylalanine--tRNA ligase alpha subunit of Pseudomonas aeruginosa (strain ATCC 15692 / DSM 22644 / CIP 104116 / JCM 14847 / LMG 12228 / 1C / PRS 101 / PAO1).